The primary structure comprises 431 residues: Helix-loop-helix protein 11 (431 aa).

A disordered region spans residues 88 to 109 (LANRSLSQPAPLSPTSLDPDRR). Polar residues predominate over residues 91–103 (RSLSQPAPLSPTS). One can recognise a bHLH domain in the interval 112-163 (MRRQIANCNERRRMQSINAGFLALRALLPRKEGEKLSKAAILQQTADMVHQL). 2 stretches are compositionally biased toward polar residues: residues 226–241 (TTTS…PRSN) and 248–257 (LPSSYASSAL). Residues 226-311 (TTTSSQASSP…PPPTLPSLET (86 aa)) are disordered. The span at 274–291 (TTSTPLSLLTLNGSPTSS) shows a compositional bias: low complexity.

Expressed in the pharynx, nerve cords, the H-shaped excretory cell, vulva muscles, and the anal depressor (at protein level). Expressed in the intestine (at protein level). In males, it is also expressed in the spicules and hyp7 cells of the hypodermis (at protein level).

It localises to the nucleus. Functionally, transcriptional regulator. Component of a feedback loop involving atfs-1, atgl-1 and hlh-11. Binds to the promoter of the atgl-1 lipase to negatively regulate the expression of atgl-1, and thereby promoting fat oxidation in response to mitochondrial stress and mitochondrial respiration in the intestine. In addition, functions with atfs-1 to maintain lifespan. May have a role in fertility and in positively regulating body size. The sequence is that of Helix-loop-helix protein 11 from Caenorhabditis elegans.